A 230-amino-acid chain; its full sequence is Uracil-DNA glycosylase (230 aa).

The Proton acceptor role is filled by Asp70.

It belongs to the uracil-DNA glycosylase (UDG) superfamily. UNG family.

The protein localises to the cytoplasm. The catalysed reaction is Hydrolyzes single-stranded DNA or mismatched double-stranded DNA and polynucleotides, releasing free uracil.. Functionally, excises uracil residues from the DNA which can arise as a result of misincorporation of dUMP residues by DNA polymerase or due to deamination of cytosine. The polypeptide is Uracil-DNA glycosylase (Pseudomonas entomophila (strain L48)).